Reading from the N-terminus, the 174-residue chain is Large ribosomal subunit protein uL10 (174 aa).

It belongs to the universal ribosomal protein uL10 family. In terms of assembly, part of the ribosomal stalk of the 50S ribosomal subunit. The N-terminus interacts with L11 and the large rRNA to form the base of the stalk. The C-terminus forms an elongated spine to which L12 dimers bind in a sequential fashion forming a multimeric L10(L12)X complex.

In terms of biological role, forms part of the ribosomal stalk, playing a central role in the interaction of the ribosome with GTP-bound translation factors. This is Large ribosomal subunit protein uL10 from Geotalea uraniireducens (strain Rf4) (Geobacter uraniireducens).